We begin with the raw amino-acid sequence, 233 residues long: UPF0758 protein SRU_2338 (233 aa).

An MPN domain is found at Gln110–Ile232. Residues His181, His183, and Asp194 each contribute to the Zn(2+) site. The JAMM motif signature appears at His181–Asp194.

This sequence belongs to the UPF0758 family.

This Salinibacter ruber (strain DSM 13855 / M31) protein is UPF0758 protein SRU_2338.